The chain runs to 208 residues: Ribosomal RNA large subunit methyltransferase E (208 aa).

Residues G63, W65, D83, D99, and D124 each contribute to the S-adenosyl-L-methionine site. K164 (proton acceptor) is an active-site residue.

It belongs to the class I-like SAM-binding methyltransferase superfamily. RNA methyltransferase RlmE family.

It localises to the cytoplasm. The catalysed reaction is uridine(2552) in 23S rRNA + S-adenosyl-L-methionine = 2'-O-methyluridine(2552) in 23S rRNA + S-adenosyl-L-homocysteine + H(+). Functionally, specifically methylates the uridine in position 2552 of 23S rRNA at the 2'-O position of the ribose in the fully assembled 50S ribosomal subunit. This chain is Ribosomal RNA large subunit methyltransferase E, found in Alcanivorax borkumensis (strain ATCC 700651 / DSM 11573 / NCIMB 13689 / SK2).